Consider the following 408-residue polypeptide: Putative mannan endo-1,4-beta-mannosidase P (408 aa).

The signal sequence occupies residues 1-23; it reads MKCLCFIVLLAIVIAQSYVGVEA. Residue asparagine 73 is glycosylated (N-linked (GlcNAc...) asparagine). Substrate-binding residues include tryptophan 85 and asparagine 201. Glutamate 202 functions as the Proton donor in the catalytic mechanism. Glutamate 322 functions as the Nucleophile in the catalytic mechanism. Residue tryptophan 364 participates in substrate binding.

The protein belongs to the glycosyl hydrolase 5 (cellulase A) family.

It localises to the secreted. The catalysed reaction is Random hydrolysis of (1-&gt;4)-beta-D-mannosidic linkages in mannans, galactomannans and glucomannans.. In Arabidopsis thaliana (Mouse-ear cress), this protein is Putative mannan endo-1,4-beta-mannosidase P (MANP).